The primary structure comprises 1064 residues: Isoleucine--tRNA ligase, cytoplasmic (1064 aa).

Residues 42–52 (PFATGRPHHGH) carry the 'HIGH' region motif. Residues 597 to 601 (KMSKR) carry the 'KMSKS' region motif. ATP is bound at residue Lys600.

It belongs to the class-I aminoacyl-tRNA synthetase family.

It is found in the cytoplasm. The enzyme catalyses tRNA(Ile) + L-isoleucine + ATP = L-isoleucyl-tRNA(Ile) + AMP + diphosphate. The sequence is that of Isoleucine--tRNA ligase, cytoplasmic (irs1) from Schizosaccharomyces pombe (strain 972 / ATCC 24843) (Fission yeast).